Consider the following 308-residue polypeptide: GDP-L-colitose synthase (308 aa).

NADP(+) is bound by residues 7-13 (GAGGMVG) and 101-104 (LGSS). Tyr132 (proton donor/acceptor) is an active-site residue. NADP(+) is bound by residues Lys136, 160–163 (PCNL), and His176. Positions 184, 199, and 206 each coordinate substrate.

The protein belongs to the NAD(P)-dependent epimerase/dehydratase family. Fucose synthase subfamily. In terms of assembly, homodimer.

The enzyme catalyses GDP-beta-L-colitose + NAD(+) = GDP-4-dehydro-3,6-dideoxy-alpha-D-mannose + NADH + H(+). It catalyses the reaction GDP-beta-L-colitose + NADP(+) = GDP-4-dehydro-3,6-dideoxy-alpha-D-mannose + NADPH + H(+). Its pathway is nucleotide-sugar metabolism; GDP-L-colitose biosynthesis. In terms of biological role, involved in the biosynthesis of the L-colitose (3,6-dideoxyl-L-xylo-hexose) present in the O-antigen region of lipopolysaccharides (LPS) where it serves as antigenic determinant and are vital for bacterial defense and survival. Catalyzes the two-step NADP-dependent conversion of GDP-4-keto-3,6-dideoxy-D-mannose to GDP-L-colitose. ColC is a bifunctional enzyme catalyzing the C-5 epimerization of GDP-4-keto-3,6-dideoxy-D-mannose and the subsequent C-4 keto reduction of the resulting L-epimer to give GDP-L-colitose. It can use both NADP(+) and NAD(+) as electron acceptor, with a slight preference for NADP(+). The protein is GDP-L-colitose synthase of Yersinia pseudotuberculosis.